Here is a 430-residue protein sequence, read N- to C-terminus: Histidine--tRNA ligase (430 aa).

The protein belongs to the class-II aminoacyl-tRNA synthetase family. Homodimer.

It localises to the cytoplasm. The enzyme catalyses tRNA(His) + L-histidine + ATP = L-histidyl-tRNA(His) + AMP + diphosphate + H(+). The polypeptide is Histidine--tRNA ligase (Chlorobaculum parvum (strain DSM 263 / NCIMB 8327) (Chlorobium vibrioforme subsp. thiosulfatophilum)).